A 168-amino-acid chain; its full sequence is Cyclic pyranopterin monophosphate synthase (168 aa).

Substrate-binding positions include 83–85 (LCH) and 121–122 (ME). The active site involves Asp136.

Belongs to the MoaC family. Homohexamer; trimer of dimers.

It carries out the reaction (8S)-3',8-cyclo-7,8-dihydroguanosine 5'-triphosphate = cyclic pyranopterin phosphate + diphosphate. Its pathway is cofactor biosynthesis; molybdopterin biosynthesis. Its function is as follows. Catalyzes the conversion of (8S)-3',8-cyclo-7,8-dihydroguanosine 5'-triphosphate to cyclic pyranopterin monophosphate (cPMP). This Nostoc sp. (strain PCC 7120 / SAG 25.82 / UTEX 2576) protein is Cyclic pyranopterin monophosphate synthase.